Reading from the N-terminus, the 127-residue chain is uncharacterized protein (127 aa).

The 46-residue stretch at 1 to 46 (MEVGLSPSACLRRIKLMEQAGVIRGYTALVDPTQSESTIAVIINIT) folds into the HTH asnC-type domain.

In terms of biological role, not known, symbiotically active. This is an uncharacterized protein from Sinorhizobium fredii (strain NBRC 101917 / NGR234).